The chain runs to 365 residues: UPF0283 membrane protein Avi_2471 (365 aa).

The span at 1-10 (MSKAPEDQRP) shows a compositional bias: basic and acidic residues. A disordered region spans residues 1-47 (MSKAPEDQRPMPRRPAAFSLEEPSSSPARPPFAEAQEPQRRAPKSFD). A run of 2 helical transmembrane segments spans residues 83–103 (FGKL…GLWI) and 117–137 (LGYT…VVVI).

Belongs to the UPF0283 family.

It is found in the cell inner membrane. The chain is UPF0283 membrane protein Avi_2471 from Allorhizobium ampelinum (strain ATCC BAA-846 / DSM 112012 / S4) (Agrobacterium vitis (strain S4)).